Here is a 111-residue protein sequence, read N- to C-terminus: Large ribosomal subunit protein eL34B (111 aa).

Y76 bears the Phosphotyrosine mark.

Belongs to the eukaryotic ribosomal protein eL34 family. Component of the large ribosomal subunit (LSU). Mature yeast ribosomes consist of a small (40S) and a large (60S) subunit. The 40S small subunit contains 1 molecule of ribosomal RNA (18S rRNA) and at least 33 different proteins. The large 60S subunit contains 3 rRNA molecules (25S, 5.8S and 5S rRNA) and at least 46 different proteins.

Its subcellular location is the cytoplasm. The protein resides in the nucleus. It is found in the nucleolus. Functionally, component of the ribosome, a large ribonucleoprotein complex responsible for the synthesis of proteins in the cell. The small ribosomal subunit (SSU) binds messenger RNAs (mRNAs) and translates the encoded message by selecting cognate aminoacyl-transfer RNA (tRNA) molecules. The large subunit (LSU) contains the ribosomal catalytic site termed the peptidyl transferase center (PTC), which catalyzes the formation of peptide bonds, thereby polymerizing the amino acids delivered by tRNAs into a polypeptide chain. The nascent polypeptides leave the ribosome through a tunnel in the LSU and interact with protein factors that function in enzymatic processing, targeting, and the membrane insertion of nascent chains at the exit of the ribosomal tunnel. The polypeptide is Large ribosomal subunit protein eL34B (rpl3402) (Schizosaccharomyces pombe (strain 972 / ATCC 24843) (Fission yeast)).